The chain runs to 377 residues: Histidinol-phosphate aminotransferase (377 aa).

The residue at position 230 (lysine 230) is an N6-(pyridoxal phosphate)lysine.

The protein belongs to the class-II pyridoxal-phosphate-dependent aminotransferase family. Histidinol-phosphate aminotransferase subfamily. As to quaternary structure, homodimer. Pyridoxal 5'-phosphate serves as cofactor.

The enzyme catalyses L-histidinol phosphate + 2-oxoglutarate = 3-(imidazol-4-yl)-2-oxopropyl phosphate + L-glutamate. It functions in the pathway amino-acid biosynthesis; L-histidine biosynthesis; L-histidine from 5-phospho-alpha-D-ribose 1-diphosphate: step 7/9. This is Histidinol-phosphate aminotransferase from Mycobacterium leprae (strain Br4923).